Consider the following 241-residue polypeptide: Probable transcriptional regulatory protein str0195 (241 aa).

It belongs to the TACO1 family. YeeN subfamily.

The protein resides in the cytoplasm. The chain is Probable transcriptional regulatory protein str0195 from Streptococcus thermophilus (strain CNRZ 1066).